Reading from the N-terminus, the 387-residue chain is Apoptosis-inducing factor homolog B (387 aa).

FAD-binding positions include 12–16, arginine 47, and aspartate 292; that span reads GGGYG.

This sequence belongs to the FAD-dependent oxidoreductase family. FAD serves as cofactor.

In terms of biological role, putative FAD-dependent oxidoreductase. This is Apoptosis-inducing factor homolog B (aifB) from Dictyostelium discoideum (Social amoeba).